Reading from the N-terminus, the 263-residue chain is Adaptin ear-binding coat-associated protein 2 (263 aa).

Disordered stretches follow at residues 167–191 (KKEG…LPPP) and 209–263 (GGSL…WVQF). Ser181 is modified (phosphoserine). Short sequence motifs (WXXF motif) lie at residues 218–221 (GSGG) and 238–241 (DIWG). Low complexity predominate over residues 246-263 (STGSPSSQSQPGTGWVQF).

It belongs to the NECAP family. In terms of assembly, interacts with AP1G1 and AP2A1 components of the adapter protein complexes AP-1 and AP-2. Interacts with the GAE domain proteins GGA1, GGA2 and GGA3. Expressed in brain, heart, kidney, liver and lung (at protein level).

The protein localises to the cytoplasmic vesicle. It localises to the clathrin-coated vesicle membrane. Its subcellular location is the cell membrane. Its function is as follows. Involved in endocytosis. In Rattus norvegicus (Rat), this protein is Adaptin ear-binding coat-associated protein 2 (Necap2).